The chain runs to 328 residues: MAAPVASLNPALAGIDSLFSAFPSSSSLPLGVAYSGGADSTALLLAAAERWPGQVQAFHIHHGLQAAADDFVRVCESVCAKAGLPLHIVQVDARHASGESPEDAARRARYAALATAATARGMQGVLLGQHADDQVETMLLALSRGAGLPGLSAMPASFGRGGMVFYRPLLHIPSAVLREWLVEQPIEFVDDPTNTDERYTRNRIRARLLPALAQAFPQFHATFARSARHAAQAQAVLVEVAAQDLAVVGNPPAIKALQALSPPRQANVLRHWLLLQYATPSAAQLEQLLHQVAACTTRGHRIHLKVASGHVTRLGGSLCYSDAAARAC.

An ATP-binding site is contributed by 35 to 40 (SGGADS).

The protein belongs to the tRNA(Ile)-lysidine synthase family.

It is found in the cytoplasm. It carries out the reaction cytidine(34) in tRNA(Ile2) + L-lysine + ATP = lysidine(34) in tRNA(Ile2) + AMP + diphosphate + H(+). In terms of biological role, ligates lysine onto the cytidine present at position 34 of the AUA codon-specific tRNA(Ile) that contains the anticodon CAU, in an ATP-dependent manner. Cytidine is converted to lysidine, thus changing the amino acid specificity of the tRNA from methionine to isoleucine. This is tRNA(Ile)-lysidine synthase from Polaromonas naphthalenivorans (strain CJ2).